The primary structure comprises 275 residues: Light-independent protochlorophyllide reductase iron-sulfur ATP-binding protein (275 aa).

ATP contacts are provided by residues 12-17 and lysine 41; that span reads GIGKST. Residue serine 16 coordinates Mg(2+). Positions 97 and 131 each coordinate [4Fe-4S] cluster. 182 to 183 contacts ATP; the sequence is NR.

Belongs to the NifH/BchL/ChlL family. Homodimer. Protochlorophyllide reductase is composed of three subunits; BchL, BchN and BchB. [4Fe-4S] cluster serves as cofactor.

It carries out the reaction chlorophyllide a + oxidized 2[4Fe-4S]-[ferredoxin] + 2 ADP + 2 phosphate = protochlorophyllide a + reduced 2[4Fe-4S]-[ferredoxin] + 2 ATP + 2 H2O. It participates in porphyrin-containing compound metabolism; bacteriochlorophyll biosynthesis (light-independent). In terms of biological role, component of the dark-operative protochlorophyllide reductase (DPOR) that uses Mg-ATP and reduced ferredoxin to reduce ring D of protochlorophyllide (Pchlide) to form chlorophyllide a (Chlide). This reaction is light-independent. The L component serves as a unique electron donor to the NB-component of the complex, and binds Mg-ATP. The chain is Light-independent protochlorophyllide reductase iron-sulfur ATP-binding protein from Chlorobium limicola (strain DSM 245 / NBRC 103803 / 6330).